The sequence spans 388 residues: MNLHEYQGKQLFAEYGLPVSKGYAVDTPEAAAEACDKIGGTEWVVKAQVHAGGRGKAGGVKLVRSKEDAAAFAQQWLGKRLVTYQTDANGQPVTKILVESCTDIAKELYLGAVVDRSSRRIVFMASTEGGVDIEKIAHDTPEKILKATIDPLVGAQPFQGRDLAFQLGLEGKQVTQFAKIFTGLAKLFQDHDLALLEVNPLVIKADGDLHCLDAKINIDANAMYRQPKLKGFHDPSQDDPREAHAAKFELNYVALEGNIGCMVNGAGLAMGTMDIVNLHGGKPANFLDVGGGATKERVTEAFKIILSDTNVAAVLVNIFGGIVRCDMIAEGIIGAVKEVGVKIPVVVRLEGNNAELGAKVLAESGLNIIAATSLTDAAQQVVKAAEGK.

Positions 9-244 (KQLFAEYGLP…PSQDDPREAH (236 aa)) constitute an ATP-grasp domain. ATP is bound by residues Lys46, 53 to 55 (GRG), Glu99, Thr102, and Glu107. Residues Asn199 and Asp213 each contribute to the Mg(2+) site. Substrate is bound by residues Asn264 and 321 to 323 (GIV).

This sequence belongs to the succinate/malate CoA ligase beta subunit family. Heterotetramer of two alpha and two beta subunits. The cofactor is Mg(2+).

The enzyme catalyses succinate + ATP + CoA = succinyl-CoA + ADP + phosphate. The catalysed reaction is GTP + succinate + CoA = succinyl-CoA + GDP + phosphate. It functions in the pathway carbohydrate metabolism; tricarboxylic acid cycle; succinate from succinyl-CoA (ligase route): step 1/1. In terms of biological role, succinyl-CoA synthetase functions in the citric acid cycle (TCA), coupling the hydrolysis of succinyl-CoA to the synthesis of either ATP or GTP and thus represents the only step of substrate-level phosphorylation in the TCA. The beta subunit provides nucleotide specificity of the enzyme and binds the substrate succinate, while the binding sites for coenzyme A and phosphate are found in the alpha subunit. This is Succinate--CoA ligase [ADP-forming] subunit beta from Pseudomonas syringae pv. tomato (strain ATCC BAA-871 / DC3000).